The primary structure comprises 153 residues: Histone H2B.10 (153 aa).

Basic and acidic residues-rich tracts occupy residues 1-28 and 36-53; these read MAPK…EKAL and EKRL…EGKK. The segment at 1–61 is disordered; the sequence is MAPKAEKKPA…KKAGRKKAKK (61 aa). N6-acetyllysine occurs at positions 7 and 37. Lys149 participates in a covalent cross-link: Glycyl lysine isopeptide (Lys-Gly) (interchain with G-Cter in ubiquitin).

The protein belongs to the histone H2B family. As to quaternary structure, the nucleosome is a histone octamer containing two molecules each of H2A, H2B, H3 and H4 assembled in one H3-H4 heterotetramer and two H2A-H2B heterodimers. The octamer wraps approximately 147 bp of DNA. Post-translationally, can be acetylated to form H2BK6ac and H2BK33ac. In terms of processing, monoubiquitinated by BRE1 to form H2BK143ub1 and deubiquitinated by UBP26. Required for heterochromatic histone H3 di- and trimethylation at H3K4me. May give a specific tag for epigenetic transcriptional activation.

The protein resides in the nucleus. The protein localises to the chromosome. Its function is as follows. Core component of nucleosome. Nucleosomes wrap and compact DNA into chromatin, limiting DNA accessibility to the cellular machineries which require DNA as a template. Histones thereby play a central role in transcription regulation, DNA repair, DNA replication and chromosomal stability. DNA accessibility is regulated via a complex set of post-translational modifications of histones, also called histone code, and nucleosome remodeling. The protein is Histone H2B.10 (H2B.10) of Oryza sativa subsp. japonica (Rice).